Reading from the N-terminus, the 154-residue chain is Protein X (154 aa).

A mitochondrial targeting sequence region spans residues 68 to 117; sequence PCALRFTSARCMETTVNAHQILPKVLHKRTLGLPAMSTTDLEAYFKDSVF.

This sequence belongs to the orthohepadnavirus protein X family. May form homodimer. May interact with host CEBPA, CFLAR, CREB1, DDB1, E4F1, HBXIP, HSPD1/HSP60, NFKBIA, POLR2E and SMAD4. Interacts with host SMC5-SMC6 complex and induces its degradation. Interacts with host TRPC4AP; leading to prevent ubiquitination of TRPC4AP. Interacts with host PLSCR1; this interaction promotes ubiquitination and degradation of HBx and impairs HBx-mediated cell proliferation. In terms of processing, a fraction may be phosphorylated in insect cells and HepG2 cells, a human hepatoblastoma cell line. Phosphorylated in vitro by host protein kinase C or mitogen-activated protein kinase. N-acetylated in insect cells.

It is found in the host cytoplasm. Its subcellular location is the host nucleus. It localises to the host mitochondrion. Functionally, multifunctional protein that plays a role in silencing host antiviral defenses and promoting viral transcription. Does not seem to be essential for HBV infection. May be directly involved in development of cirrhosis and liver cancer (hepatocellular carcinoma). Most of cytosolic activities involve modulation of cytosolic calcium. The effect on apoptosis is controversial depending on the cell types in which the studies have been conducted. May induce apoptosis by localizing in mitochondria and causing loss of mitochondrial membrane potential. May also modulate apoptosis by binding host CFLAR, a key regulator of the death-inducing signaling complex (DISC). Promotes viral transcription by using the host E3 ubiquitin ligase DDB1 to target the SMC5-SMC6 complex to proteasomal degradation. This host complex would otherwise bind to viral episomal DNA, and prevents its transcription. Moderately stimulates transcription of many different viral and cellular transcription elements. Promoters and enhancers stimulated by HBx contain DNA binding sites for NF-kappa-B, AP-1, AP-2, c-EBP, ATF/CREB, or the calcium-activated factor NF-AT. The polypeptide is Protein X (Homo sapiens (Human)).